The sequence spans 431 residues: Glutamate-1-semialdehyde 2,1-aminomutase (431 aa).

Lys269 is modified (N6-(pyridoxal phosphate)lysine).

Belongs to the class-III pyridoxal-phosphate-dependent aminotransferase family. HemL subfamily. In terms of assembly, homodimer. The cofactor is pyridoxal 5'-phosphate.

It is found in the cytoplasm. It carries out the reaction (S)-4-amino-5-oxopentanoate = 5-aminolevulinate. Its pathway is porphyrin-containing compound metabolism; protoporphyrin-IX biosynthesis; 5-aminolevulinate from L-glutamyl-tRNA(Glu): step 2/2. It functions in the pathway porphyrin-containing compound metabolism; chlorophyll biosynthesis. The polypeptide is Glutamate-1-semialdehyde 2,1-aminomutase (Chlorobium chlorochromatii (strain CaD3)).